We begin with the raw amino-acid sequence, 474 residues long: Glutamate--tRNA ligase (474 aa).

The 'HIGH' region signature appears at 10–20 (PSPTGYLHIGG). 4 residues coordinate Zn(2+): C107, C109, C134, and D136. The short motif at 244–248 (RLSKR) is the 'KMSKS' region element. K247 lines the ATP pocket.

This sequence belongs to the class-I aminoacyl-tRNA synthetase family. Glutamate--tRNA ligase type 1 subfamily. As to quaternary structure, monomer. The cofactor is Zn(2+).

The protein resides in the cytoplasm. It carries out the reaction tRNA(Glu) + L-glutamate + ATP = L-glutamyl-tRNA(Glu) + AMP + diphosphate. In terms of biological role, catalyzes the attachment of glutamate to tRNA(Glu) in a two-step reaction: glutamate is first activated by ATP to form Glu-AMP and then transferred to the acceptor end of tRNA(Glu). The chain is Glutamate--tRNA ligase from Anaeromyxobacter dehalogenans (strain 2CP-C).